The sequence spans 122 residues: Head fiber dimeric protein (122 aa).

As to quaternary structure, homodimer. Interacts with the major capsid protein.

It is found in the virion. Functionally, forms short fibers at the surface of the viral capsid. This chain is Head fiber dimeric protein, found in Bacteroides intestinalis (Bacteroides phage PhiCrAss001).